The chain runs to 279 residues: Phosphate-binding protein PstS (279 aa).

The N-terminal stretch at 1–18 is a signal peptide; sequence MKKVIILIFMLSTSLLYN. Cys19 carries the N-palmitoyl cysteine lipid modification. Residue Cys19 is the site of S-diacylglycerol cysteine attachment. Residues 33–35, Ser63, and 151–153 contribute to the phosphate site; these read STT and SGS.

Belongs to the PstS family. As to quaternary structure, monomer (in vitro). The complex is composed of two ATP-binding proteins (PstB), two transmembrane proteins (PstC and PstA) and a solute-binding protein (PstS).

Its subcellular location is the cell membrane. Functionally, binds inorganic phosphate with a Kd of 1.2 uM. Part of the ABC transporter complex PstSACB involved in phosphate import. This chain is Phosphate-binding protein PstS, found in Borreliella burgdorferi (strain ATCC 35210 / DSM 4680 / CIP 102532 / B31) (Borrelia burgdorferi).